Reading from the N-terminus, the 281-residue chain is Proteasome subunit beta 2 (281 aa).

A propeptide spans 1 to 53 (MEANTRSTGRLPAAFLTPGSSSFMDFLSEHQPEILPGNRQLPPTQGVIEAPHG) (removed in mature form; by autocatalysis). The Nucleophile role is filled by T54.

This sequence belongs to the peptidase T1B family. The 20S proteasome core is composed of 14 alpha and 14 beta subunits that assemble into four stacked heptameric rings, resulting in a barrel-shaped structure. The two inner rings, each composed of seven catalytic beta subunits, are sandwiched by two outer rings, each composed of seven alpha subunits. The catalytic chamber with the active sites is on the inside of the barrel. Has a gated structure, the ends of the cylinder being occluded by the N-termini of the alpha-subunits. Is capped by the proteasome-associated ATPase, ARC.

Its subcellular location is the cytoplasm. The enzyme catalyses Cleavage of peptide bonds with very broad specificity.. It functions in the pathway protein degradation; proteasomal Pup-dependent pathway. Its activity is regulated as follows. The formation of the proteasomal ATPase ARC-20S proteasome complex, likely via the docking of the C-termini of ARC into the intersubunit pockets in the alpha-rings, may trigger opening of the gate for substrate entry. Interconversion between the open-gate and close-gate conformations leads to a dynamic regulation of the 20S proteasome proteolysis activity. In terms of biological role, component of the proteasome core, a large protease complex with broad specificity involved in protein degradation. The chain is Proteasome subunit beta 2 from Streptomyces avermitilis (strain ATCC 31267 / DSM 46492 / JCM 5070 / NBRC 14893 / NCIMB 12804 / NRRL 8165 / MA-4680).